The chain runs to 492 residues: Protein nucleotidyltransferase YdiU (492 aa).

ATP-binding residues include glycine 101, glycine 103, arginine 104, lysine 124, aspartate 136, glycine 137, arginine 187, and arginine 194. Residue aspartate 268 is the Proton acceptor of the active site. Residues asparagine 269 and aspartate 278 each contribute to the Mg(2+) site. Position 278 (aspartate 278) interacts with ATP.

The protein belongs to the SELO family. Mg(2+) is required as a cofactor. Requires Mn(2+) as cofactor.

It catalyses the reaction L-seryl-[protein] + ATP = 3-O-(5'-adenylyl)-L-seryl-[protein] + diphosphate. The enzyme catalyses L-threonyl-[protein] + ATP = 3-O-(5'-adenylyl)-L-threonyl-[protein] + diphosphate. It carries out the reaction L-tyrosyl-[protein] + ATP = O-(5'-adenylyl)-L-tyrosyl-[protein] + diphosphate. The catalysed reaction is L-histidyl-[protein] + UTP = N(tele)-(5'-uridylyl)-L-histidyl-[protein] + diphosphate. It catalyses the reaction L-seryl-[protein] + UTP = O-(5'-uridylyl)-L-seryl-[protein] + diphosphate. The enzyme catalyses L-tyrosyl-[protein] + UTP = O-(5'-uridylyl)-L-tyrosyl-[protein] + diphosphate. Nucleotidyltransferase involved in the post-translational modification of proteins. It can catalyze the addition of adenosine monophosphate (AMP) or uridine monophosphate (UMP) to a protein, resulting in modifications known as AMPylation and UMPylation. The polypeptide is Protein nucleotidyltransferase YdiU (Corynebacterium efficiens (strain DSM 44549 / YS-314 / AJ 12310 / JCM 11189 / NBRC 100395)).